Consider the following 137-residue polypeptide: Probable 4-amino-4-deoxy-L-arabinose-phosphoundecaprenol flippase subunit ArnF (137 aa).

At 1-5 (MSRAR) the chain is on the cytoplasmic side. The chain crosses the membrane as a helical span at residues 6 to 26 (GFAFALGSVALVSGAQLGMRW). The Periplasmic segment spans residues 27 to 49 (SMTRLPAPDQWLPALSAGSVDLA). The chain crosses the membrane as a helical span at residues 50–70 (ALAVVAAAIAAYALSMLCWLL). Residues 71–80 (ALRDLPLGRA) are Cytoplasmic-facing. A helical transmembrane segment spans residues 81 to 101 (YSLLSISYALVYLLAASLPLF). N102 is a topological domain (periplasmic). The chain crosses the membrane as a helical span at residues 103 to 123 (EPFTLSKTLGVALVILGVITI). Residues 124 to 137 (NSRSAPATSPRNTP) are Cytoplasmic-facing.

It belongs to the ArnF family. Heterodimer of ArnE and ArnF.

The protein localises to the cell inner membrane. The protein operates within bacterial outer membrane biogenesis; lipopolysaccharide biosynthesis. Translocates 4-amino-4-deoxy-L-arabinose-phosphoundecaprenol (alpha-L-Ara4N-phosphoundecaprenol) from the cytoplasmic to the periplasmic side of the inner membrane. The polypeptide is Probable 4-amino-4-deoxy-L-arabinose-phosphoundecaprenol flippase subunit ArnF (Pseudomonas fluorescens (strain ATCC BAA-477 / NRRL B-23932 / Pf-5)).